We begin with the raw amino-acid sequence, 197 residues long: Peptidyl-tRNA hydrolase (197 aa).

Tyr-21 contributes to the tRNA binding site. Residue His-26 is the Proton acceptor of the active site. Residues Tyr-72, Asn-74, and Asn-120 each coordinate tRNA.

The protein belongs to the PTH family. In terms of assembly, monomer.

The protein localises to the cytoplasm. The catalysed reaction is an N-acyl-L-alpha-aminoacyl-tRNA + H2O = an N-acyl-L-amino acid + a tRNA + H(+). Hydrolyzes ribosome-free peptidyl-tRNAs (with 1 or more amino acids incorporated), which drop off the ribosome during protein synthesis, or as a result of ribosome stalling. Its function is as follows. Catalyzes the release of premature peptidyl moieties from peptidyl-tRNA molecules trapped in stalled 50S ribosomal subunits, and thus maintains levels of free tRNAs and 50S ribosomes. This chain is Peptidyl-tRNA hydrolase, found in Alkalilimnicola ehrlichii (strain ATCC BAA-1101 / DSM 17681 / MLHE-1).